Here is a 259-residue protein sequence, read N- to C-terminus: Dihydroorotate dehydrogenase B (NAD(+)), electron transfer subunit (259 aa).

The FAD-binding FR-type domain maps to 2-102 (MQKQNMIVVN…LGPLGHGFPL (101 aa)). Residues 53 to 56 (RPIS), 70 to 72 (LYR), and 77 to 78 (GT) contribute to the FAD site. 4 residues coordinate [2Fe-2S] cluster: cysteine 221, cysteine 226, cysteine 229, and cysteine 246.

Belongs to the PyrK family. Heterotetramer of 2 PyrK and 2 PyrD type B subunits. Requires [2Fe-2S] cluster as cofactor. FAD serves as cofactor.

It functions in the pathway pyrimidine metabolism; UMP biosynthesis via de novo pathway; orotate from (S)-dihydroorotate (NAD(+) route): step 1/1. Responsible for channeling the electrons from the oxidation of dihydroorotate from the FMN redox center in the PyrD type B subunit to the ultimate electron acceptor NAD(+). The polypeptide is Dihydroorotate dehydrogenase B (NAD(+)), electron transfer subunit (Bacillus cereus (strain B4264)).